Consider the following 125-residue polypeptide: GNERFRCPETLFQPSFIGMESAGIHETTYNSIMKCDIDIRKDLYANNVMSGGTTMYPGIADRMQKEITALAPSTMKIKIIAPPERKYSVWIGGSILASLSTFQQMWITKQEYDEAGPSIVHRKCF.

It belongs to the actin family. In terms of assembly, polymerization of globular actin (G-actin) leads to a structural filament (F-actin) in the form of a two-stranded helix. Each actin can bind to 4 others. Post-translationally, methylated at His-75 by SETD3.

The protein localises to the cytoplasm. The protein resides in the cytoskeleton. In terms of biological role, actins are highly conserved proteins that are involved in various types of cell motility and are ubiquitously expressed in all eukaryotic cells. This chain is Actin, alpha skeletal muscle, found in Pleurodeles waltl (Iberian ribbed newt).